The chain runs to 255 residues: Zinc import ATP-binding protein ZnuC (255 aa).

The ABC transporter domain maps to 4-219; that stretch reads VDVDGLSLRY…PEYRALFGTG (216 aa). 36-43 contributes to the ATP binding site; sequence GPNGSGKT. The tract at residues 234-255 is disordered; it reads EHDHHDGCAHGQATEDRTEAAE.

Belongs to the ABC transporter superfamily. Zinc importer (TC 3.A.1.15.5) family. In terms of assembly, the complex is composed of two ATP-binding proteins (ZnuC), two transmembrane proteins (ZnuB) and a solute-binding protein (ZnuA).

The protein localises to the cell inner membrane. It carries out the reaction Zn(2+)(out) + ATP(in) + H2O(in) = Zn(2+)(in) + ADP(in) + phosphate(in) + H(+)(in). Its function is as follows. Part of the ABC transporter complex ZnuABC involved in zinc import. Responsible for energy coupling to the transport system. This Roseobacter denitrificans (strain ATCC 33942 / OCh 114) (Erythrobacter sp. (strain OCh 114)) protein is Zinc import ATP-binding protein ZnuC.